We begin with the raw amino-acid sequence, 369 residues long: Aminomethyltransferase (369 aa).

It belongs to the GcvT family. As to quaternary structure, the glycine cleavage system is composed of four proteins: P, T, L and H.

It carries out the reaction N(6)-[(R)-S(8)-aminomethyldihydrolipoyl]-L-lysyl-[protein] + (6S)-5,6,7,8-tetrahydrofolate = N(6)-[(R)-dihydrolipoyl]-L-lysyl-[protein] + (6R)-5,10-methylene-5,6,7,8-tetrahydrofolate + NH4(+). Functionally, the glycine cleavage system catalyzes the degradation of glycine. This is Aminomethyltransferase from Alkaliphilus metalliredigens (strain QYMF).